Here is a 618-residue protein sequence, read N- to C-terminus: UvrABC system protein C (618 aa).

The 79-residue stretch at 19–97 folds into the GIY-YIG domain; that stretch reads SEPGIYRMLD…IKALRPKYNV (79 aa). In terms of domain architecture, UVR spans 208–243; it reads QIILDELAERMKNAVSQLNFEEAAVLRDQIKNLRLI.

The protein belongs to the UvrC family. As to quaternary structure, interacts with UvrB in an incision complex.

The protein localises to the cytoplasm. In terms of biological role, the UvrABC repair system catalyzes the recognition and processing of DNA lesions. UvrC both incises the 5' and 3' sides of the lesion. The N-terminal half is responsible for the 3' incision and the C-terminal half is responsible for the 5' incision. The sequence is that of UvrABC system protein C from Legionella pneumophila (strain Lens).